The following is a 709-amino-acid chain: Homeobox-leucine zipper protein TF1 (709 aa).

The segment at residues 66–125 is a DNA-binding region (homeobox); the sequence is RKRRLQRLTGKQSEVLEGFFSICGHPDDGQKRHLSETTGLGLDQVKFWFQNKRTQVKTMC. The stretch at 166-187 forms a coiled coil; that stretch reads NQLAVEMERLMGQSEWLQQEIA. The 230-residue stretch at 212–441 folds into the START domain; the sequence is GQHDQQMIAE…MARQSARMRD (230 aa).

This sequence belongs to the HD-ZIP homeobox family. Class IV subfamily.

It localises to the nucleus. Probable transcription factor. This Oryza sativa subsp. japonica (Rice) protein is Homeobox-leucine zipper protein TF1 (TF1).